Reading from the N-terminus, the 154-residue chain is Methylglyoxal synthase (154 aa).

The MGS-like domain occupies 6 to 154 (GALPSRKQIA…AYIAERTKKL (149 aa)). Substrate-binding positions include H19, K23, 45 to 48 (TGTT), and 65 to 66 (SG). Catalysis depends on D71, which acts as the Proton donor/acceptor. A substrate-binding site is contributed by H98.

The protein belongs to the methylglyoxal synthase family.

It catalyses the reaction dihydroxyacetone phosphate = methylglyoxal + phosphate. Functionally, catalyzes the formation of methylglyoxal from dihydroxyacetone phosphate. This Saccharophagus degradans (strain 2-40 / ATCC 43961 / DSM 17024) protein is Methylglyoxal synthase.